Here is a 317-residue protein sequence, read N- to C-terminus: Melanocyte-stimulating hormone receptor (317 aa).

The Extracellular portion of the chain corresponds to 1-37; it reads MPVQGSQRRLLGSLNSTPTATPHLGLAANQTGAWCLE. Asn-29 carries N-linked (GlcNAc...) asparagine glycosylation. A helical membrane pass occupies residues 38-63; that stretch reads VSIPDGLFLSLGLVSLVENVLVVTAI. At 64–72 the chain is on the cytoplasmic side; sequence AKNRNLHSP. Residues 73-93 form a helical membrane-spanning segment; it reads MYCFICCLALSDLLVSGSNML. Over 94 to 118 the chain is Extracellular; the sequence is ETAVTLLLEAGALAARAAVVQQLDN. Residues 119–140 traverse the membrane as a helical segment; the sequence is VIDVITCSSMLSSLCFLGAIAV. Residues 141–163 are Cytoplasmic-facing; that stretch reads DRYISIFYALRYHSIVTLPRARR. The chain crosses the membrane as a helical span at residues 164–183; sequence AVAAIWVASVLFSMLFIAYY. Residues 184–191 lie on the Extracellular side of the membrane; that stretch reads DHAAVLLC. Residues 192-211 form a helical membrane-spanning segment; that stretch reads LVVFFLAMLVLMAVLYVHML. The Cytoplasmic segment spans residues 212-240; that stretch reads ARACQHAQGIARLHKRQRPAHQGFGLKGA. Residues 241–266 traverse the membrane as a helical segment; the sequence is ATLTILLGIFFLCWGPFFLHLTLIVL. The Extracellular segment spans residues 267–279; sequence CPQHPTCSCIFKN. A helical membrane pass occupies residues 280-300; the sequence is FNLFLALIICNAIIDPLIYAF. Residues 301–317 lie on the Cytoplasmic side of the membrane; it reads RSQELRRTLKEVLLCSW. A lipid anchor (S-palmitoyl cysteine) is attached at Cys-315.

This sequence belongs to the G-protein coupled receptor 1 family. Interacts with MGRN1, but does not undergo MGRN1-mediated ubiquitination; this interaction competes with GNAS-binding and thus inhibits agonist-induced cAMP production. Interacts with OPN3; the interaction results in a decrease in MC1R-mediated cAMP signaling and ultimately a decrease in melanin production in melanocytes.

It is found in the cell membrane. Its function is as follows. Receptor for MSH (alpha, beta and gamma) and ACTH. The activity of this receptor is mediated by G proteins which activate adenylate cyclase. Mediates melanogenesis, the production of eumelanin (black/brown) and phaeomelanin (red/yellow), via regulation of cAMP signaling in melanocytes. The protein is Melanocyte-stimulating hormone receptor (MC1R) of Allenopithecus nigroviridis (Allen's swamp monkey).